The chain runs to 158 residues: Phosphopantetheine adenylyltransferase (158 aa).

T10 is a substrate binding site. Residues 10 to 11 (TF) and H18 each bind ATP. Substrate contacts are provided by K42, L74, and R88. Residues 89–91 (GLR), E99, and 124–130 (YSFISSS) each bind ATP.

This sequence belongs to the bacterial CoaD family. As to quaternary structure, homohexamer. It depends on Mg(2+) as a cofactor.

Its subcellular location is the cytoplasm. It catalyses the reaction (R)-4'-phosphopantetheine + ATP + H(+) = 3'-dephospho-CoA + diphosphate. Its pathway is cofactor biosynthesis; coenzyme A biosynthesis; CoA from (R)-pantothenate: step 4/5. Its function is as follows. Reversibly transfers an adenylyl group from ATP to 4'-phosphopantetheine, yielding dephospho-CoA (dPCoA) and pyrophosphate. The polypeptide is Phosphopantetheine adenylyltransferase (Erwinia tasmaniensis (strain DSM 17950 / CFBP 7177 / CIP 109463 / NCPPB 4357 / Et1/99)).